The chain runs to 153 residues: Nascent polypeptide-associated complex subunit beta (153 aa).

2 disordered regions span residues 1 to 40 (MSDV…ADDK) and 126 to 153 (LQKE…PKVE). The segment covering 23-32 (TPRRKVKRAP) has biased composition (basic residues). Residues 36–101 (GADDKKLQLA…GEDKELTELV (66 aa)) form the NAC-A/B domain. The span at 132-147 (EDDDEIPDLVEGENFE) shows a compositional bias: acidic residues.

This sequence belongs to the NAC-beta family. In terms of assembly, part of the nascent polypeptide-associated complex (NAC), consisting of EGD2 and EGD1. NAC associates with ribosomes via EGD1.

The protein localises to the cytoplasm. The protein resides in the nucleus. Component of the nascent polypeptide-associated complex (NAC), a dynamic component of the ribosomal exit tunnel, protecting the emerging polypeptides from interaction with other cytoplasmic proteins to ensure appropriate nascent protein targeting. The NAC complex also promotes mitochondrial protein import by enhancing productive ribosome interactions with the outer mitochondrial membrane and blocks the inappropriate interaction of ribosomes translating non-secretory nascent polypeptides with translocation sites in the membrane of the endoplasmic reticulum. EGD1 may act as a transcription factor that exert a negative effect on the expression of several genes that are transcribed by RNA polymerase II. The sequence is that of Nascent polypeptide-associated complex subunit beta (EGD1) from Gibberella zeae (strain ATCC MYA-4620 / CBS 123657 / FGSC 9075 / NRRL 31084 / PH-1) (Wheat head blight fungus).